We begin with the raw amino-acid sequence, 182 residues long: ATP synthase subunit delta, mitochondrial (182 aa).

The transit peptide at 1-17 (MFRTFGRRLVSCTLPLL) directs the protein to the mitochondrion.

Belongs to the ATPase epsilon chain family. In terms of assembly, F-type ATPases have 2 components, F(1) - the catalytic core - and F(o) - the membrane proton channel. F(1) has five subunits: alpha(3), beta(3), gamma(1), delta(1), epsilon(1), plus the additional subunit P18 (Tb427.05.1710) that is not present in F(1)F(o) ATP synthase from metazoa. Subunit P18 (Tb927.5.1710) interacts with the alpha subunit with a 1:1 stoichiometry; the interaction is direct. Subunit gamma is part of the central stalk. F(o) has three main subunits: a, b and c. The trypanosomal ATPase complex contains additional subunits that are not present in the F(1)F(o) ATP synthase from metazoa.

It is found in the mitochondrion. The protein localises to the mitochondrion inner membrane. Its function is as follows. Mitochondrial membrane ATP synthase (F(1)F(o) ATP synthase) produces ATP from ADP in the presence of a proton gradient across the membrane which is generated by electron transport complexes of the respiratory chain. F-type ATPases consist of two structural domains, F(1) - containing the extramembraneous catalytic core, and F(o) - containing the membrane proton channel, linked together by a central stalk and a peripheral stalk. During catalysis, ATP synthesis in the catalytic domain of F(1) is coupled via a rotary mechanism of the central stalk subunits to proton translocation. Subunits alpha and beta form the catalytic core in F(1). Rotation of the central stalk against the surrounding alpha(3)beta(3) subunits leads to hydrolysis of ATP in three separate catalytic sites on the beta subunits. Contrary to the procyclic, insect form that requires F(1)F(o) ATP synthase for ATP synthesis, the bloodstream form relies on ATP hydrolysis by F(1)F(o) ATP synthase to maintain its mitochondrial membrane potential. This chain is ATP synthase subunit delta, mitochondrial, found in Trypanosoma brucei brucei.